The sequence spans 792 residues: Terminal nucleotidyltransferase 4A (792 aa).

Residues 55-191 (GAAGRGSGGL…QFHPGRRKRE (137 aa)) form a disordered region. Low complexity-rich tracts occupy residues 80–97 (APAA…PAAE) and 105–139 (SPSL…ASLG). Positions 297 and 299 each coordinate Mg(2+). ATP-binding residues include Gly360, Lys385, Ser403, and Tyr404. Residues 428 to 486 (NLGMLLVEFFELYGRNFNYLKTGIRIKEGGAYIAKEEIMKAMTSGYRPSMLCIEDPLLP) form the PAP-associated domain. Positions 488 and 492 each coordinate ATP. The segment covering 601-619 (QLLSSGSSASSVSSLSGSD) has biased composition (low complexity). Disordered stretches follow at residues 601-632 (QLLS…TPSV) and 737-792 (MKGS…SLSR). A compositionally biased stretch (gly residues) spans 744–756 (TQGGGYSSVGSGG). The span at 764 to 781 (RGHHQYNRTGWRRKKHTH) shows a compositional bias: basic residues.

The protein belongs to the DNA polymerase type-B-like family. As to quaternary structure, component of a nuclear TRAMP-like complex, an ATP-dependent exosome regulatory complex consisting of a helicase (MTREX), an oligadenylate polymerase (TENT4B or TENT4A), and a substrate specific RNA-binding factor (ZCCHC7 or ZCCHC8). Several TRAMP-like complexes exist with specific compositions and are associated with nuclear, or nucleolar RNA exosomes. The cofactor is Mg(2+). Mn(2+) serves as cofactor.

The protein resides in the cytoplasm. It localises to the nucleus. Its subcellular location is the nucleoplasm. It carries out the reaction RNA(n) + ATP = RNA(n)-3'-adenine ribonucleotide + diphosphate. Its function is as follows. Terminal nucleotidyltransferase that catalyzes preferentially the transfer of ATP and GTP on RNA 3' poly(A) tail creating a heterogeneous 3' poly(A) tail leading to mRNAs stabilization by protecting mRNAs from active deadenylation. Also functions as a catalytic subunit of a TRAMP-like complex which has a poly(A) RNA polymerase activity and is involved in a post-transcriptional quality control mechanism. Polyadenylation with short oligo(A) tails is required for the degradative activity of the exosome on several of its nuclear RNA substrates. Has no terminal uridylyltransferase activity, and does not play a role in replication-dependent histone mRNA degradation via uridylation. The sequence is that of Terminal nucleotidyltransferase 4A from Homo sapiens (Human).